A 485-amino-acid polypeptide reads, in one-letter code: Trigger factor (485 aa).

The region spanning 171 to 256 (GDRVVIDFVG…VKAVKAPGEA (86 aa)) is the PPIase FKBP-type domain. Residues 443 to 485 (FADDEDEAAEAAAPASEAGASKGVISEGVISEGSAPSHETGAA) form a disordered region. Residues 452 to 462 (EAAAPASEAGA) show a composition bias toward low complexity.

The protein belongs to the FKBP-type PPIase family. Tig subfamily.

It localises to the cytoplasm. The catalysed reaction is [protein]-peptidylproline (omega=180) = [protein]-peptidylproline (omega=0). In terms of biological role, involved in protein export. Acts as a chaperone by maintaining the newly synthesized protein in an open conformation. Functions as a peptidyl-prolyl cis-trans isomerase. This is Trigger factor from Methylobacterium sp. (strain 4-46).